The chain runs to 178 residues: MKNIIEKMIYISRWLIFPIYLGLSFCLILLTLKFFQLVFFIFPEIFFISESGLILVILSLIDIVLVGGLLVMVMFSGYENFISKMNIEGDKLGWMGTMDVNSIKNKVSSAIVAISSVHLLRVFMETEKVSNEKIVWYVIIHLTFVVSAGGMAYIDRLNKSNINSSTRKCSVLVNRRKK.

A run of 3 helical transmembrane segments spans residues 14–34, 53–73, and 136–156; these read WLIFPIYLGLSFCLILLTLKF, LILVILSLIDIVLVGGLLVMV, and WYVIIHLTFVVSAGGMAYIDR.

The protein belongs to the UPF0114 family.

It localises to the cell membrane. This is UPF0114 protein in repA1-repA2 intergenic region from Buchnera aphidicola subsp. Tetraneura caerulescens.